Reading from the N-terminus, the 372-residue chain is Pepsin A (372 aa).

A propeptide spans 1–42 (MSVVKIPLVKKKSLRQNLIENGKLKEFMRTHKYNLGSKYIRE) (activation peptide). In terms of domain architecture, Peptidase A1 spans 60–369 (YFGTIGIGTP…DRGNNQIGLA (310 aa)). The active site involves Asp-78. A disulfide bridge links Cys-91 with Cys-96. A Phosphoserine modification is found at Ser-114. Cys-252 and Cys-256 are joined by a disulfide. The active site involves Asp-261. Cys-295 and Cys-328 are oxidised to a cystine.

The protein belongs to the peptidase A1 family.

The protein localises to the secreted. The enzyme catalyses Preferential cleavage: hydrophobic, preferably aromatic, residues in P1 and P1' positions. Cleaves 1-Phe-|-Val-2, 4-Gln-|-His-5, 13-Glu-|-Ala-14, 14-Ala-|-Leu-15, 15-Leu-|-Tyr-16, 16-Tyr-|-Leu-17, 23-Gly-|-Phe-24, 24-Phe-|-Phe-25 and 25-Phe-|-Tyr-26 bonds in the B chain of insulin.. Shows particularly broad specificity; although bonds involving phenylalanine and leucine are preferred, many others are also cleaved to some extent. The chain is Pepsin A (PGA) from Bos taurus (Bovine).